Here is a 78-residue protein sequence, read N- to C-terminus: Pancreatic polypeptide prohormone (78 aa).

The signal sequence occupies residues 1–19; that stretch reads LLLSTCVALLLQPPLGALG. At Tyr-55 the chain carries Tyrosine amide.

The protein belongs to the NPY family.

It is found in the secreted. Its function is as follows. Hormone secreted by pancreatic cells that acts as a regulator of pancreatic and gastrointestinal functions probably by signaling through the G protein-coupled receptor NPY4R2. The polypeptide is Pancreatic polypeptide prohormone (PPY) (Ovis aries (Sheep)).